The primary structure comprises 309 residues: NAD kinase (309 aa).

Asp89 functions as the Proton acceptor in the catalytic mechanism. NAD(+) is bound by residues 89 to 90 (DG), 163 to 164 (NE), His174, Arg191, Asp193, and 204 to 209 (TAYALS).

It belongs to the NAD kinase family. A divalent metal cation is required as a cofactor.

Its subcellular location is the cytoplasm. It carries out the reaction NAD(+) + ATP = ADP + NADP(+) + H(+). Functionally, involved in the regulation of the intracellular balance of NAD and NADP, and is a key enzyme in the biosynthesis of NADP. Catalyzes specifically the phosphorylation on 2'-hydroxyl of the adenosine moiety of NAD to yield NADP. This Shewanella sp. (strain MR-4) protein is NAD kinase.